Consider the following 309-residue polypeptide: HPr kinase/phosphorylase (309 aa).

Catalysis depends on residues histidine 138 and lysine 159. 153–160 (GKSGVGKS) lines the ATP pocket. Mg(2+) is bound at residue serine 160. Catalysis depends on aspartate 177, which acts as the Proton acceptor; for phosphorylation activity. Proton donor; for dephosphorylation activity. The interval 201 to 210 (LEIRGLGIIN) is important for the catalytic mechanism of both phosphorylation and dephosphorylation. Mg(2+) is bound at residue glutamate 202. The active site involves arginine 243. An important for the catalytic mechanism of dephosphorylation region spans residues 264-269 (PVRPGR).

Belongs to the HPrK/P family. In terms of assembly, homohexamer. The cofactor is Mg(2+).

The enzyme catalyses [HPr protein]-L-serine + ATP = [HPr protein]-O-phospho-L-serine + ADP + H(+). It carries out the reaction [HPr protein]-O-phospho-L-serine + phosphate + H(+) = [HPr protein]-L-serine + diphosphate. Functionally, catalyzes the ATP- as well as the pyrophosphate-dependent phosphorylation of a specific serine residue in HPr, a phosphocarrier protein of the phosphoenolpyruvate-dependent sugar phosphotransferase system (PTS). HprK/P also catalyzes the pyrophosphate-producing, inorganic phosphate-dependent dephosphorylation (phosphorolysis) of seryl-phosphorylated HPr (P-Ser-HPr). The two antagonistic activities of HprK/P are regulated by several intracellular metabolites, which change their concentration in response to the absence or presence of rapidly metabolisable carbon sources (glucose, fructose, etc.) in the growth medium. Also phosphorylates/dephosphorylates the HPr-like catabolite repression protein crh on a specific serine residue. Therefore, by controlling the phosphorylation state of HPr and crh, HPrK/P is a sensor enzyme that plays a major role in the regulation of carbon metabolism and sugar transport: it mediates carbon catabolite repression (CCR), and regulates PTS-catalyzed carbohydrate uptake and inducer exclusion. The protein is HPr kinase/phosphorylase of Geobacillus thermodenitrificans (strain NG80-2).